Here is a 711-residue protein sequence, read N- to C-terminus: Ribosomal RNA large subunit methyltransferase K/L (711 aa).

The THUMP domain maps to 43–154 (LGYRITLWSR…RGQITIGLNF (112 aa)).

The protein belongs to the methyltransferase superfamily. RlmKL family.

The protein resides in the cytoplasm. The enzyme catalyses guanosine(2445) in 23S rRNA + S-adenosyl-L-methionine = N(2)-methylguanosine(2445) in 23S rRNA + S-adenosyl-L-homocysteine + H(+). It carries out the reaction guanosine(2069) in 23S rRNA + S-adenosyl-L-methionine = N(2)-methylguanosine(2069) in 23S rRNA + S-adenosyl-L-homocysteine + H(+). Specifically methylates the guanine in position 2445 (m2G2445) and the guanine in position 2069 (m7G2069) of 23S rRNA. In Shewanella woodyi (strain ATCC 51908 / MS32), this protein is Ribosomal RNA large subunit methyltransferase K/L.